A 728-amino-acid polypeptide reads, in one-letter code: Catalase-peroxidase (728 aa).

A disordered region spans residues 1–26; sequence MDNPTDTAGKCPVAHGNKPRGPSNRD. The tryptophyl-tyrosyl-methioninium (Trp-Tyr) (with M-244) cross-link spans 96 to 218; sequence WHSAGTYRIT…LGAVQMGLIY (123 aa). H97 functions as the Proton acceptor in the catalytic mechanism. The segment at residues 218–244 is a cross-link (tryptophyl-tyrosyl-methioninium (Tyr-Met) (with W-96)); sequence YVNPEGPNGNPDPVAAARDIRETFARM. Position 259 (H259) interacts with heme b.

This sequence belongs to the peroxidase family. Peroxidase/catalase subfamily. Homodimer or homotetramer. Heme b is required as a cofactor. In terms of processing, formation of the three residue Trp-Tyr-Met cross-link is important for the catalase, but not the peroxidase activity of the enzyme.

It catalyses the reaction H2O2 + AH2 = A + 2 H2O. The catalysed reaction is 2 H2O2 = O2 + 2 H2O. Its function is as follows. Bifunctional enzyme with both catalase and broad-spectrum peroxidase activity. Important for stationary phase survival. The chain is Catalase-peroxidase from Rhizobium etli (strain ATCC 51251 / DSM 11541 / JCM 21823 / NBRC 15573 / CFN 42).